The following is a 1019-amino-acid chain: DNA topoisomerase 1 (1019 aa).

The tract at residues 1-160 (MNSIQVKNEP…KTMSITGSGE (160 aa)) is disordered. Positions 46-56 (KPLAKRPKVED) are enriched in basic and acidic residues. The segment covering 62–78 (PLTSTVSSQNGVQKRSG) has biased composition (polar residues). Composition is skewed to acidic residues over residues 83 to 93 (DDNDDDSDSDS) and 107 to 136 (SDDD…DDDD). Interaction with DNA stretches follow at residues 379–380 (KY), 442–447 (RAGNEK), and 556–558 (SAK). In terms of domain architecture, Topo IB-type catalytic spans 386 to 860 (TSNFKTNSDR…KKVKKEEEEN (475 aa)). The disordered stretch occupies residues 716–737 (EQKGLTGDDGTPKKGKKAKNVE). Residue Y822 is the O-(3'-phospho-DNA)-tyrosine intermediate of the active site. Disordered regions lie at residues 843–890 (GQGK…TGDS) and 940–1019 (MRKL…AAVV). A compositionally biased stretch (basic and acidic residues) spans 854–863 (KKEEEENDIK). The segment covering 864 to 879 (PKKKDAKGAASKKRAA) has biased composition (basic residues). Composition is skewed to basic and acidic residues over residues 940-950 (MRKLDSAERKG) and 980-996 (TSAD…VDKT). Over residues 997-1012 (EESDDDLSSDSSDDED) the composition is skewed to acidic residues.

Belongs to the type IB topoisomerase family. Monomer.

The enzyme catalyses ATP-independent breakage of single-stranded DNA, followed by passage and rejoining.. Functionally, releases the supercoiling and torsional tension of DNA introduced during the DNA replication and transcription by transiently cleaving and rejoining one strand of the DNA duplex. Introduces a single-strand break via transesterification at a target site in duplex DNA. The scissile phosphodiester is attacked by the catalytic tyrosine of the enzyme, resulting in the formation of a DNA-(3'-phosphotyrosyl)-enzyme intermediate and the expulsion of a 5'-OH DNA strand. The free DNA strand then rotates around the intact phosphodiester bond on the opposing strand, thus removing DNA supercoils. Finally, in the religation step, the DNA 5'-OH attacks the covalent intermediate to expel the active-site tyrosine and restore the DNA phosphodiester backbone. The protein is DNA topoisomerase 1 (TOP1) of Mycosarcoma maydis (Corn smut fungus).